The sequence spans 526 residues: Cytochrome P450 monooxygenase BOT4 (526 aa).

The N-linked (GlcNAc...) asparagine glycan is linked to Asn-5. The chain crosses the membrane as a helical span at residues Cys-41–His-61. Asn-205 and Asn-281 each carry an N-linked (GlcNAc...) asparagine glycan. A heme-binding site is contributed by Cys-464.

Belongs to the cytochrome P450 family. It depends on heme as a cofactor.

The protein localises to the membrane. It functions in the pathway secondary metabolite biosynthesis. Functionally, cytochrome P450 monooxygenase; part of the gene cluster that mediates the biosynthesis of botrydial. Botrydial is necessary for colonization of plant tissue by the T4 strain. It is a strain-dependent virulence factor since highly aggressive strains like SAS56 or B05 still retain substantial virulence when botrydial synthesis is impaired, since they produce also botcinic acid. The first step of botrydial biosynthesis is performed by the sesquiterpene synthase BOT2 which catalyzes the cyclization of farnesyl diphosphate (FPP) to presilphiperfolan-8-beta-ol (PSP). The cytochrome P450 monooxygenase BOT4 then catalyzes the hydroxylation at C-4 to give a probotryane intermediate. Acetylation of the hydroxyl at C-4 is carried out by the acetyltransferase BOT5, followed by the combined action of the P450 monooxygenases BOT3 and BOT1, to yield finally the glycol, via the regio- and stereospecific hydroxylations at C-10 and C-15 of the probotryane intermediates, respectively. The cleavage of the C10-C15 bond of probotryane skeleton is an intriguing and chemically important reaction, which could be mediated by some of the monooxygenases or by a combination of them. It is possible that either BOT3 or BOT1 would oxidize either the 10- or the 15-hydroxy group to the hydroperoxide derivative, which would then undergo heterolytic fragmentation to give the dialdehyde botrydial. Finally, the dehydrogenase BOT7 might be involved in the conversion of botrydial to dihydrobotrydial. The protein is Cytochrome P450 monooxygenase BOT4 of Botryotinia fuckeliana (Noble rot fungus).